A 130-amino-acid polypeptide reads, in one-letter code: Small ribosomal subunit protein uS8 (130 aa).

It belongs to the universal ribosomal protein uS8 family. As to quaternary structure, part of the 30S ribosomal subunit. Contacts proteins S5 and S12.

Functionally, one of the primary rRNA binding proteins, it binds directly to 16S rRNA central domain where it helps coordinate assembly of the platform of the 30S subunit. This is Small ribosomal subunit protein uS8 from Pectobacterium atrosepticum (strain SCRI 1043 / ATCC BAA-672) (Erwinia carotovora subsp. atroseptica).